Consider the following 360-residue polypeptide: Protein phosphatase methylesterase 1 (360 aa).

Residues 26–50 are disordered; sequence DEDDIPEPAVMPPTGNSSSTANTED. Residues Ser167, Asp192, and His316 contribute to the active site.

The protein belongs to the AB hydrolase superfamily.

It carries out the reaction [phosphatase 2A protein]-C-terminal L-leucine methyl ester + H2O = [phosphatase 2A protein]-C-terminal L-leucine + methanol + H(+). In terms of biological role, demethylates proteins that have been reversibly carboxymethylated. Demethylates the phosphatase PP2A catalytic subunit. Involved in the regulation of filamentous growth. The protein is Protein phosphatase methylesterase 1 (PPE1) of Candida albicans (strain SC5314 / ATCC MYA-2876) (Yeast).